We begin with the raw amino-acid sequence, 21 residues long: Fibrinogen beta chain (21 aa).

Pyrrolidone carboxylic acid is present on Gln1. Residue Tyr6 is modified to Sulfotyrosine.

Heterohexamer; disulfide linked. Contains 2 sets of 3 non-identical chains (alpha, beta and gamma). The 2 heterotrimers are in head to head conformation with the N-termini in a small central domain. Post-translationally, conversion of fibrinogen to fibrin is triggered by thrombin, which cleaves fibrinopeptides A and B from alpha and beta chains, and thus exposes the N-terminal polymerization sites responsible for the formation of the soft clot.

It is found in the secreted. Functionally, cleaved by the protease thrombin to yield monomers which, together with fibrinogen alpha (FGA) and fibrinogen gamma (FGG), polymerize to form an insoluble fibrin matrix. Fibrin has a major function in hemostasis as one of the primary components of blood clots. In addition, functions during the early stages of wound repair to stabilize the lesion and guide cell migration during re-epithelialization. Was originally thought to be essential for platelet aggregation, based on in vitro studies using anticoagulated blood. However subsequent studies have shown that it is not absolutely required for thrombus formation in vivo. Enhances expression of SELP in activated platelets. Maternal fibrinogen is essential for successful pregnancy. Fibrin deposition is also associated with infection, where it protects against IFNG-mediated hemorrhage. May also facilitate the antibacterial immune response via both innate and T-cell mediated pathways. This chain is Fibrinogen beta chain (FGB), found in Odocoileus hemionus (Mule deer).